The chain runs to 209 residues: Glutathione S-transferase 1-1 (209 aa).

Positions 1–81 constitute a GST N-terminal domain; sequence MADFYYLPGS…YLVEKYGKTD (81 aa). Glutathione-binding positions include 51 to 53 and 65 to 67; these read HTI and ESR. The region spanning 87–209 is the GST C-terminal domain; that stretch reads CPKKRAVINQ…GCLEFKKYFE (123 aa).

This sequence belongs to the GST superfamily. Theta family. Homodimer.

It carries out the reaction RX + glutathione = an S-substituted glutathione + a halide anion + H(+). In terms of biological role, conjugation of reduced glutathione to a wide number of exogenous and endogenous hydrophobic electrophiles. The protein is Glutathione S-transferase 1-1 (GstD1) of Drosophila yakuba (Fruit fly).